Here is a 158-residue protein sequence, read N- to C-terminus: NAD(P)H-quinone oxidoreductase subunit J, chloroplastic (158 aa).

Belongs to the complex I 30 kDa subunit family. In terms of assembly, NDH is composed of at least 16 different subunits, 5 of which are encoded in the nucleus.

It is found in the plastid. Its subcellular location is the chloroplast thylakoid membrane. The catalysed reaction is a plastoquinone + NADH + (n+1) H(+)(in) = a plastoquinol + NAD(+) + n H(+)(out). The enzyme catalyses a plastoquinone + NADPH + (n+1) H(+)(in) = a plastoquinol + NADP(+) + n H(+)(out). In terms of biological role, NDH shuttles electrons from NAD(P)H:plastoquinone, via FMN and iron-sulfur (Fe-S) centers, to quinones in the photosynthetic chain and possibly in a chloroplast respiratory chain. The immediate electron acceptor for the enzyme in this species is believed to be plastoquinone. Couples the redox reaction to proton translocation, and thus conserves the redox energy in a proton gradient. This is NAD(P)H-quinone oxidoreductase subunit J, chloroplastic from Ceratophyllum demersum (Rigid hornwort).